A 71-amino-acid chain; its full sequence is High-potential iron-sulfur protein isozyme 2 (71 aa).

Residues C34, C37, C51, and C65 each contribute to the [4Fe-4S] cluster site.

It belongs to the high-potential iron-sulfur protein (HiPIP) family. As to quaternary structure, homodimer.

Specific class of high-redox-potential 4Fe-4S ferredoxins. Functions in anaerobic electron transport in most purple and in some other photosynthetic bacteria and in at least one genus (Paracoccus) of halophilic, denitrifying bacteria. This Ectothiorhodospira shaposhnikovii (Ectothiorhodospira vacuolata) protein is High-potential iron-sulfur protein isozyme 2 (hip2).